Reading from the N-terminus, the 715-residue chain is Tensin-4 (715 aa).

The first 18 residues, methionine 1–leucine 18, serve as a signal peptide directing secretion. Residue serine 82 is modified to Phosphoserine. 4 disordered regions span residues arginine 159–glycine 183, arginine 195–valine 251, serine 291–serine 364, and leucine 376–methionine 435. The span at serine 197 to asparagine 206 shows a compositional bias: polar residues. The residue at position 248 (serine 248) is a Phosphoserine. Residues serine 291–leucine 325 show a composition bias toward low complexity. The SH2 domain maps to tryptophan 449–glutamine 556. Residues cysteine 582–valine 705 enclose the PTB domain.

The protein belongs to the PTEN phosphatase protein family. In terms of assembly, interacts (via SH2 domain) with Rho GTPase-activating protein DLC1 (via C-terminus); the interaction is independent of DLC1 tyrosine phosphorylation. Interacts with integrin ITGB1; the interaction displaces tensin TNS3 from the ITGB1 cytoplasmic tail and promotes ITGB1 stability. Interacts (via SH2 domain) with E3 ubiquitin-protein ligase CBL (phosphorylated on 'Tyr-774'); the interaction is enhanced in the presence of EGF and reduces interaction of CBL with EGFR. Interacts (via SH2 domain) with receptor tyrosine kinase MET (when phosphorylated); the interaction increases MET protein stability. Post-translationally, proteolytically cleaved by caspase-3 during apoptosis. In terms of tissue distribution, expressed at low levels in colon (at protein level). Expressed in prostate and placenta.

The protein resides in the cell junction. The protein localises to the focal adhesion. Its subcellular location is the cytoplasm. It is found in the cytoskeleton. Its function is as follows. Promotes EGF-induced cell migration by displacing tensin TNS3 from the cytoplasmic tail of integrin ITGB1 which results in dissociation of TNS3 from focal adhesions, disassembly of actin stress fibers and initiation of cell migration. Suppresses ligand-induced degradation of EGFR by reducing EGFR ubiquitination in the presence of EGF. Increases MET protein stability by inhibiting MET endocytosis and subsequent lysosomal degradation which leads to increased cell survival, proliferation and migration. The polypeptide is Tensin-4 (TNS4) (Homo sapiens (Human)).